Reading from the N-terminus, the 84-residue chain is DNA-directed RNA polymerase subunit Rpo5 (84 aa).

This sequence belongs to the archaeal Rpo5/eukaryotic RPB5 RNA polymerase subunit family. In terms of assembly, part of the 13-subunit RNA polymerase.

The protein resides in the cytoplasm. It carries out the reaction RNA(n) + a ribonucleoside 5'-triphosphate = RNA(n+1) + diphosphate. In terms of biological role, DNA-dependent RNA polymerase (RNAP) catalyzes the transcription of DNA into RNA using the four ribonucleoside triphosphates as substrates. Functionally, reconstitution experiments show this subunit is required for basic activity. The chain is DNA-directed RNA polymerase subunit Rpo5 from Sulfolobus acidocaldarius (strain ATCC 33909 / DSM 639 / JCM 8929 / NBRC 15157 / NCIMB 11770).